Consider the following 293-residue polypeptide: Acetylglutamate kinase (293 aa).

Substrate-binding positions include 68 to 69 (GG), Arg90, and Asn189.

It belongs to the acetylglutamate kinase family. ArgB subfamily.

The protein resides in the cytoplasm. The catalysed reaction is N-acetyl-L-glutamate + ATP = N-acetyl-L-glutamyl 5-phosphate + ADP. Its pathway is amino-acid biosynthesis; L-arginine biosynthesis; N(2)-acetyl-L-ornithine from L-glutamate: step 2/4. Catalyzes the ATP-dependent phosphorylation of N-acetyl-L-glutamate. The polypeptide is Acetylglutamate kinase (Mycolicibacterium smegmatis (strain ATCC 700084 / mc(2)155) (Mycobacterium smegmatis)).